We begin with the raw amino-acid sequence, 473 residues long: Glutamate--tRNA ligase (473 aa).

Positions 11 to 21 match the 'HIGH' region motif; sequence PSPTGFLHIGG. The 'KMSKS' region motif lies at 240–244; sequence KLSKR. Lysine 243 is an ATP binding site.

The protein belongs to the class-I aminoacyl-tRNA synthetase family. Glutamate--tRNA ligase type 1 subfamily. As to quaternary structure, monomer.

The protein resides in the cytoplasm. The catalysed reaction is tRNA(Glu) + L-glutamate + ATP = L-glutamyl-tRNA(Glu) + AMP + diphosphate. Catalyzes the attachment of glutamate to tRNA(Glu) in a two-step reaction: glutamate is first activated by ATP to form Glu-AMP and then transferred to the acceptor end of tRNA(Glu). In Rhodopseudomonas palustris (strain HaA2), this protein is Glutamate--tRNA ligase.